Reading from the N-terminus, the 342-residue chain is Pre-mRNA-splicing factor 18 (342 aa).

Met-1 bears the N-acetylmethionine mark.

Belongs to the PRP18 family. In terms of assembly, heterodimer with PPIH. Interacts with PRPF4 and with the spliceosome. Part of a complex containing U4/U6 snRNPs.

It is found in the nucleus speckle. Its function is as follows. Participates in the second step of pre-mRNA splicing. This chain is Pre-mRNA-splicing factor 18 (Prpf18), found in Mus musculus (Mouse).